A 246-amino-acid chain; its full sequence is Purine nucleoside phosphorylase Cgl2154/cg2365 (246 aa).

Zn(2+)-binding residues include His68, Cys107, and His124.

It belongs to the purine nucleoside phosphorylase YfiH/LACC1 family. As to quaternary structure, homodimer. The cofactor is Cu(2+). Zn(2+) serves as cofactor.

It carries out the reaction adenosine + phosphate = alpha-D-ribose 1-phosphate + adenine. The enzyme catalyses S-methyl-5'-thioadenosine + phosphate = 5-(methylsulfanyl)-alpha-D-ribose 1-phosphate + adenine. It catalyses the reaction inosine + phosphate = alpha-D-ribose 1-phosphate + hypoxanthine. The catalysed reaction is adenosine + H2O + H(+) = inosine + NH4(+). In terms of biological role, purine nucleoside enzyme that catalyzes the phosphorolysis of adenosine and inosine nucleosides, yielding D-ribose 1-phosphate and the respective free bases, adenine and hypoxanthine. Also catalyzes the phosphorolysis of S-methyl-5'-thioadenosine into adenine and S-methyl-5-thio-alpha-D-ribose 1-phosphate. Also has adenosine deaminase activity. This is Purine nucleoside phosphorylase Cgl2154/cg2365 from Corynebacterium glutamicum (strain ATCC 13032 / DSM 20300 / JCM 1318 / BCRC 11384 / CCUG 27702 / LMG 3730 / NBRC 12168 / NCIMB 10025 / NRRL B-2784 / 534).